Consider the following 268-residue polypeptide: 4-hydroxy-tetrahydrodipicolinate reductase (268 aa).

NAD(+)-binding positions include 10–15 (GASGRM) and Asp-36. An NADP(+)-binding site is contributed by Arg-37. Residues 99 to 101 (GTT) and 123 to 126 (SANM) contribute to the NAD(+) site. Catalysis depends on His-156, which acts as the Proton donor/acceptor. Residue His-157 coordinates (S)-2,3,4,5-tetrahydrodipicolinate. The active-site Proton donor is Lys-160. 166-167 (GT) is a binding site for (S)-2,3,4,5-tetrahydrodipicolinate.

Belongs to the DapB family.

Its subcellular location is the cytoplasm. The catalysed reaction is (S)-2,3,4,5-tetrahydrodipicolinate + NAD(+) + H2O = (2S,4S)-4-hydroxy-2,3,4,5-tetrahydrodipicolinate + NADH + H(+). It carries out the reaction (S)-2,3,4,5-tetrahydrodipicolinate + NADP(+) + H2O = (2S,4S)-4-hydroxy-2,3,4,5-tetrahydrodipicolinate + NADPH + H(+). Its pathway is amino-acid biosynthesis; L-lysine biosynthesis via DAP pathway; (S)-tetrahydrodipicolinate from L-aspartate: step 4/4. Functionally, catalyzes the conversion of 4-hydroxy-tetrahydrodipicolinate (HTPA) to tetrahydrodipicolinate. This chain is 4-hydroxy-tetrahydrodipicolinate reductase, found in Burkholderia pseudomallei (strain 1710b).